The sequence spans 426 residues: MLTIKDVHALEVMDSRGNPTIQASVILSDNTKASAIVPSGASTGKREALELRDNDKTRFLGKGVLRACENVNSVIKHHLIGLEATSQAFVDERLRALDGTPNYANLGANAVLGVSMALARASAKALNLPLYRYLGGANALTLPVPMLNIINGGTHANNSIDFQEYMIMPLGFESFREALRASAEVYHTLKKLLDGKNQLTSVGDEGGFAPNFNNNVEPLEAISQAIEKAGYKLGEEIALALDVASSELVDGNFNYHLKGENKILDSHELVAYYKELVAKYPIVSIEDGLSEDDWEGWAFLSKELGRQIQLVGDDLFVTNASILQKGIEKNVANAILIKPNQIGTISETLETIRLAKHHAYQCVMSHRSGESEDSFIADFAVALNTGEIKTGSTARSERIAKYNRLLEIEHELKGGIYIGKELFKHG.

Gln163 serves as a coordination point for (2R)-2-phosphoglycerate. Glu205 acts as the Proton donor in catalysis. Positions 242, 286, and 313 each coordinate Mg(2+). (2R)-2-phosphoglycerate contacts are provided by Lys338, Arg367, Ser368, and Lys389. The active-site Proton acceptor is the Lys338.

The protein belongs to the enolase family. It depends on Mg(2+) as a cofactor.

Its subcellular location is the cytoplasm. It localises to the secreted. It is found in the cell surface. It catalyses the reaction (2R)-2-phosphoglycerate = phosphoenolpyruvate + H2O. It participates in carbohydrate degradation; glycolysis; pyruvate from D-glyceraldehyde 3-phosphate: step 4/5. Its function is as follows. Catalyzes the reversible conversion of 2-phosphoglycerate (2-PG) into phosphoenolpyruvate (PEP). It is essential for the degradation of carbohydrates via glycolysis. In Helicobacter pylori (strain P12), this protein is Enolase.